A 241-amino-acid polypeptide reads, in one-letter code: Large ribosomal subunit protein uL3 (241 aa).

It belongs to the universal ribosomal protein uL3 family. In terms of assembly, part of the 50S ribosomal subunit. Forms a cluster with proteins L14 and L19.

Its function is as follows. One of the primary rRNA binding proteins, it binds directly near the 3'-end of the 23S rRNA, where it nucleates assembly of the 50S subunit. The polypeptide is Large ribosomal subunit protein uL3 (Aquifex aeolicus (strain VF5)).